Here is a 211-residue protein sequence, read N- to C-terminus: MADESSDAAGEPQPAPAPVRRRSSANYRAYATEPHAKKKSKISASRKLQLKTLMLQIAKQEMEREAEERRGEKGRVLSTRCQPLVLDGLGFEELQDLCRQLHARVDKVDEERYDVEAKVTKNITEIADLTQKIYDLRGKFKRPTLRRVRISADAMMQALLGTRAKESLDLRAHLKQVKKEDIEKENREVGDWRKNIDALSGMEGRKKKFEG.

The disordered stretch occupies residues methionine 1–alanine 25. N-acetylalanine is present on alanine 2. Phosphoserine occurs at positions 5 and 6. Phosphoserine; by PKA and PKD/PRKD1 occurs at positions 23 and 24. Tyrosine 27 is subject to Phosphotyrosine. At threonine 32 the chain carries Phosphothreonine; by STK4/MST1. The involved in binding TNC stretch occupies residues glutamate 33 to arginine 80. 2 positions are modified to phosphoserine; by PKC/PRKCE: serine 43 and serine 45. Threonine 52 bears the Phosphothreonine; by STK4/MST1 mark. Phosphoserine is present on serine 78. Residue threonine 79 is modified to Phosphothreonine. Phosphothreonine; by STK4/MST1 is present on residues threonine 130 and threonine 144. The segment at threonine 130 to serine 151 is involved in binding TNC and actin. Serine 151 carries the post-translational modification Phosphoserine; by PAK3. 2 positions are modified to phosphoserine: serine 167 and serine 200.

The protein belongs to the troponin I family. As to quaternary structure, interacts with TRIM63. Binds to actin and tropomyosin. Interacts with STK4/MST1. In terms of processing, phosphorylated at Ser-23 and Ser-24 by PRKD1; phosphorylation reduces myofilament calcium sensitivity. Phosphorylated preferentially at Thr-32. Phosphorylation by STK4/MST1 alters its binding affinity to TNNC1 (cardiac Tn-C) and TNNT2 (cardiac Tn-T). Phosphorylated at Ser-43 and Ser-45 by PRKCE; phosphorylation increases myocardium contractile dysfunction.

Troponin I is the inhibitory subunit of troponin, the thin filament regulatory complex which confers calcium-sensitivity to striated muscle actomyosin ATPase activity. This is Troponin I, cardiac muscle (Tnni3) from Rattus norvegicus (Rat).